A 299-amino-acid polypeptide reads, in one-letter code: dTDP-4-dehydrorhamnose reductase (299 aa).

NADH-binding positions include 10–12, Asp-30, 39–40, and 63–65; these read GQV, DF, and AHT. Residue 11–12 coordinates NADPH; it reads QV. NADPH-binding positions include 39–40, 63–65, and Tyr-102; these read DF and AHT. DTDP-beta-L-rhamnose is bound at residue 104-105; the sequence is TD. NADH-binding residues include Tyr-128 and Lys-132. Residues Tyr-128 and Lys-132 each contribute to the NADPH site. Tyr-128 acts as the Proton donor/acceptor in catalysis. Trp-153 is a binding site for dTDP-beta-L-rhamnose.

Belongs to the dTDP-4-dehydrorhamnose reductase family. As to quaternary structure, homodimer. Requires Mg(2+) as cofactor.

It catalyses the reaction dTDP-beta-L-rhamnose + NADP(+) = dTDP-4-dehydro-beta-L-rhamnose + NADPH + H(+). It participates in carbohydrate biosynthesis; dTDP-L-rhamnose biosynthesis. Its pathway is bacterial outer membrane biogenesis; LPS O-antigen biosynthesis. Its function is as follows. Involved in the biosynthesis of the dTDP-L-rhamnose which is an important component of lipopolysaccharide (LPS). Catalyzes the reduction of dTDP-6-deoxy-L-lyxo-4-hexulose to yield dTDP-L-rhamnose. RmlD uses NADH and NADPH nearly equally well. The chain is dTDP-4-dehydrorhamnose reductase from Shigella flexneri.